The sequence spans 446 residues: 3-phosphoshikimate 1-carboxyvinyltransferase (446 aa).

3 residues coordinate 3-phosphoshikimate: Lys30, Ser31, and Arg35. Lys30 serves as a coordination point for phosphoenolpyruvate. Phosphoenolpyruvate is bound by residues Gly112 and Arg140. 3-phosphoshikimate is bound by residues Ser186, Ser187, Gln188, Ser215, Glu334, and His361. Gln188 is a phosphoenolpyruvate binding site. The active-site Proton acceptor is Glu334. Phosphoenolpyruvate is bound by residues Arg365, Arg406, and Lys431.

Belongs to the EPSP synthase family. As to quaternary structure, monomer.

The protein resides in the cytoplasm. It catalyses the reaction 3-phosphoshikimate + phosphoenolpyruvate = 5-O-(1-carboxyvinyl)-3-phosphoshikimate + phosphate. The protein operates within metabolic intermediate biosynthesis; chorismate biosynthesis; chorismate from D-erythrose 4-phosphate and phosphoenolpyruvate: step 6/7. Its function is as follows. Catalyzes the transfer of the enolpyruvyl moiety of phosphoenolpyruvate (PEP) to the 5-hydroxyl of shikimate-3-phosphate (S3P) to produce enolpyruvyl shikimate-3-phosphate and inorganic phosphate. This is 3-phosphoshikimate 1-carboxyvinyltransferase from Streptomyces avermitilis (strain ATCC 31267 / DSM 46492 / JCM 5070 / NBRC 14893 / NCIMB 12804 / NRRL 8165 / MA-4680).